Consider the following 430-residue polypeptide: Protein translocase subunit SecY (430 aa).

A run of 10 helical transmembrane segments spans residues 18-38 (VIFT…PVPG), 67-87 (FSIF…MQLL), 118-138 (IVLG…FFPG), 145-165 (VSVY…LMWL), 177-197 (GISI…LNLI), 213-233 (IVVI…VIFV), 270-290 (VIPV…AGLF), 309-329 (PIGM…YTFI), 369-389 (FVGS…IKFA), and 390-410 (DLPQ…GVAL).

It belongs to the SecY/SEC61-alpha family. In terms of assembly, component of the Sec protein translocase complex. Heterotrimer consisting of SecY, SecE and SecG subunits. The heterotrimers can form oligomers, although 1 heterotrimer is thought to be able to translocate proteins. Interacts with the ribosome. Interacts with SecDF, and other proteins may be involved. Interacts with SecA.

It is found in the cell membrane. Functionally, the central subunit of the protein translocation channel SecYEG. Consists of two halves formed by TMs 1-5 and 6-10. These two domains form a lateral gate at the front which open onto the bilayer between TMs 2 and 7, and are clamped together by SecE at the back. The channel is closed by both a pore ring composed of hydrophobic SecY resides and a short helix (helix 2A) on the extracellular side of the membrane which forms a plug. The plug probably moves laterally to allow the channel to open. The ring and the pore may move independently. This Halalkalibacterium halodurans (strain ATCC BAA-125 / DSM 18197 / FERM 7344 / JCM 9153 / C-125) (Bacillus halodurans) protein is Protein translocase subunit SecY.